A 115-amino-acid chain; its full sequence is MNMLLAMLINITLSLLLISIAFWLPQLNIYTEKANPYDWGFDPMSSARLPFSMKFFLVAITFLLFDLEIALLLPIPWAIQIHSINTMMLTAFILVTILALGLAYEWIQKGLEWTE.

3 helical membrane passes run 4-24 (LLAMLINITLSLLLISIAFWL), 55-75 (FFLVAITFLLFDLEIALLLPI), and 87-107 (MMLTAFILVTILALGLAYEWI).

Belongs to the complex I subunit 3 family. As to quaternary structure, core subunit of respiratory chain NADH dehydrogenase (Complex I) which is composed of 45 different subunits. Interacts with TMEM186. Interacts with TMEM242.

The protein resides in the mitochondrion inner membrane. The enzyme catalyses a ubiquinone + NADH + 5 H(+)(in) = a ubiquinol + NAD(+) + 4 H(+)(out). Its function is as follows. Core subunit of the mitochondrial membrane respiratory chain NADH dehydrogenase (Complex I) which catalyzes electron transfer from NADH through the respiratory chain, using ubiquinone as an electron acceptor. Essential for the catalytic activity of complex I. The protein is NADH-ubiquinone oxidoreductase chain 3 of Neotoma floridana (Eastern woodrat).